Reading from the N-terminus, the 320-residue chain is L-lactate dehydrogenase A (320 aa).

3 residues coordinate substrate: Arg-88, Asn-120, and Arg-151. Residue Asn-120 coordinates NAD(+). Catalysis depends on His-175, which acts as the Proton acceptor.

The protein belongs to the LDH/MDH superfamily. LDH family. Homotetramer.

It localises to the cytoplasm. It catalyses the reaction (S)-lactate + NAD(+) = pyruvate + NADH + H(+). It participates in fermentation; pyruvate fermentation to lactate; (S)-lactate from pyruvate: step 1/1. Functionally, converts pyruvate to lactate. This Rhizopus oryzae (Mucormycosis agent) protein is L-lactate dehydrogenase A (LDHA).